The following is a 175-amino-acid chain: NADH dehydrogenase [ubiquinone] iron-sulfur protein 4, mitochondrial (175 aa).

The transit peptide at 1–42 (MAAVSMSVVLRQTLWRRRAVAVAALSVSRVPTRSLRTSTWRL) directs the protein to the mitochondrion. A disordered region spans residues 151–175 (KVPKPKSKSYGANFSWNKRTRVSTK). Position 173 is a phosphoserine; by PKA (Ser-173).

It belongs to the complex I NDUFS4 subunit family. In terms of assembly, mammalian complex I is composed of 45 different subunits. This is a component of the iron-sulfur (IP) fragment of the enzyme. Interacts with BCAP31 and TOMM40; the interaction mediates its translocation to the mitochondria; the interaction with BCAP31 is direct.

It localises to the mitochondrion inner membrane. Functionally, accessory subunit of the mitochondrial membrane respiratory chain NADH dehydrogenase (Complex I), that is believed not to be involved in catalysis. Complex I functions in the transfer of electrons from NADH to the respiratory chain. The immediate electron acceptor for the enzyme is believed to be ubiquinone. This chain is NADH dehydrogenase [ubiquinone] iron-sulfur protein 4, mitochondrial (NDUFS4), found in Homo sapiens (Human).